The following is a 1025-amino-acid chain: Multidrug resistance protein MdtC (1025 aa).

Transmembrane regions (helical) follow at residues 3–23 (FFAL…AITL), 333–353 (EVEQ…FLFL), 360–380 (IIPA…MYLC), 387–407 (LSLM…IVVL), 431–451 (VGFT…PLLL), 463–483 (FAVT…TLTP), 528–548 (LVGV…ISIP), 853–873 (VILI…LYES), 875–895 (VHPL…LLAL), 897–917 (LFNA…IGIV), 953–973 (PIMM…LSGG), and 984–1004 (ITIV…TPVV).

The protein belongs to the resistance-nodulation-cell division (RND) (TC 2.A.6) family. MdtC subfamily. As to quaternary structure, part of a tripartite efflux system composed of MdtA, MdtB and MdtC. MdtC forms a heteromultimer with MdtB.

The protein localises to the cell inner membrane. In terms of biological role, the MdtABC tripartite complex confers resistance against novobiocin and deoxycholate. The chain is Multidrug resistance protein MdtC from Escherichia coli O7:K1 (strain IAI39 / ExPEC).